A 633-amino-acid chain; its full sequence is Electron transfer flavoprotein-ubiquinone oxidoreductase, mitochondrial (633 aa).

A mitochondrion-targeting transit peptide spans 1–90 (MHRFLVKLSS…NGITSSRCIS (90 aa)). 102 to 116 (VLIVGAGPAGLSAAI) serves as a coordination point for FAD. An intramembrane segment occupies 140-161 (VGGHIISGNVFEPLALDELLPH). A ubiquinone is bound by residues G334 and G335. An intramembrane segment occupies 401-421 (IPYPVFPGGAIIGCSAGFLNV). C578, C602, C605, and C608 together coordinate [4Fe-4S] cluster. In terms of domain architecture, 4Fe-4S ferredoxin-type spans 593–622 (PKLQINAQNCLHCKACDIKDPKQNIEWTVP).

Belongs to the ETF-QO/FixC family. [4Fe-4S] cluster serves as cofactor. Requires FAD as cofactor.

The protein localises to the mitochondrion inner membrane. It catalyses the reaction a ubiquinone + reduced [electron-transfer flavoprotein] = a ubiquinol + oxidized [electron-transfer flavoprotein] + H(+). Up-regulated by KIN10, by S1-bZIP specific dimers, and also by C/S1 bZIP heterodimers. Its function is as follows. Accepts electrons from ETF and reduces ubiquinone. May act downstream of IVD and D2HGDH in the degradation of phytol or chlorophyll during dark-induced senescence and sugar starvation. The polypeptide is Electron transfer flavoprotein-ubiquinone oxidoreductase, mitochondrial (ETFQO) (Arabidopsis thaliana (Mouse-ear cress)).